The sequence spans 100 residues: Urease subunit gamma (100 aa).

Belongs to the urease gamma subunit family. Heterotrimer of UreA (gamma), UreB (beta) and UreC (alpha) subunits. Three heterotrimers associate to form the active enzyme.

It is found in the cytoplasm. The catalysed reaction is urea + 2 H2O + H(+) = hydrogencarbonate + 2 NH4(+). Its pathway is nitrogen metabolism; urea degradation; CO(2) and NH(3) from urea (urease route): step 1/1. This Ralstonia nicotianae (strain ATCC BAA-1114 / GMI1000) (Ralstonia solanacearum) protein is Urease subunit gamma.